A 1396-amino-acid polypeptide reads, in one-letter code: DNA-directed RNA polymerase subunit beta (1396 aa).

It belongs to the RNA polymerase beta chain family. In terms of assembly, the RNAP catalytic core consists of 2 alpha, 1 beta, 1 beta' and 1 omega subunit. When a sigma factor is associated with the core the holoenzyme is formed, which can initiate transcription.

The enzyme catalyses RNA(n) + a ribonucleoside 5'-triphosphate = RNA(n+1) + diphosphate. In terms of biological role, DNA-dependent RNA polymerase catalyzes the transcription of DNA into RNA using the four ribonucleoside triphosphates as substrates. The protein is DNA-directed RNA polymerase subunit beta of Erythrobacter litoralis (strain HTCC2594).